The sequence spans 168 residues: MSKLQILEFPDPRLRTVAKPVQTFDAALGQLIDDMFETMYEAPGIGLAATQVDVHKRIVVIDVSEDKSEPMVFINPDIEVLDGDPEEMQEGCLSVPGFYESVTRIPHVKIRAQDRNGESYEMEARGLLAVCLQHEVDHLNGKLYVDYLSNVKRTRIRKKLEKQHKMRA.

Fe cation is bound by residues Cys-92 and His-134. Residue Glu-135 is part of the active site. His-138 lines the Fe cation pocket.

Belongs to the polypeptide deformylase family. The cofactor is Fe(2+).

It catalyses the reaction N-terminal N-formyl-L-methionyl-[peptide] + H2O = N-terminal L-methionyl-[peptide] + formate. Removes the formyl group from the N-terminal Met of newly synthesized proteins. Requires at least a dipeptide for an efficient rate of reaction. N-terminal L-methionine is a prerequisite for activity but the enzyme has broad specificity at other positions. This Hahella chejuensis (strain KCTC 2396) protein is Peptide deformylase.